Here is a 136-residue protein sequence, read N- to C-terminus: Cell wall synthesis protein CwsA (136 aa).

Residues 94 to 114 traverse the membrane as a helical segment; that stretch reads LLIAAVAVTVLGGGAAAFSIV.

It belongs to the CwsA family. As to quaternary structure, interacts with CrgA and Wag31.

The protein resides in the cell membrane. Required for regulated cell division, cell wall synthesis and the maintenance of cell shape. In Mycolicibacterium smegmatis (strain ATCC 700084 / mc(2)155) (Mycobacterium smegmatis), this protein is Cell wall synthesis protein CwsA.